The following is a 510-amino-acid chain: Probable malate:quinone oxidoreductase (510 aa).

It belongs to the MQO family. It depends on FAD as a cofactor.

The catalysed reaction is (S)-malate + a quinone = a quinol + oxaloacetate. The protein operates within carbohydrate metabolism; tricarboxylic acid cycle; oxaloacetate from (S)-malate (quinone route): step 1/1. The chain is Probable malate:quinone oxidoreductase from Wigglesworthia glossinidia brevipalpis.